The sequence spans 104 residues: Large ribosomal subunit protein uL24 (104 aa).

Belongs to the universal ribosomal protein uL24 family. As to quaternary structure, part of the 50S ribosomal subunit.

One of two assembly initiator proteins, it binds directly to the 5'-end of the 23S rRNA, where it nucleates assembly of the 50S subunit. Its function is as follows. One of the proteins that surrounds the polypeptide exit tunnel on the outside of the subunit. The sequence is that of Large ribosomal subunit protein uL24 from Colwellia psychrerythraea (strain 34H / ATCC BAA-681) (Vibrio psychroerythus).